Here is a 179-residue protein sequence, read N- to C-terminus: Fas apoptotic inhibitory molecule 1 (179 aa).

Thr2 carries the post-translational modification N-acetylthreonine.

Belongs to the FAIM1 family. As to expression, widely expressed, with the highest levels in brain, thymus, kidney, and spleen.

It is found in the cytoplasm. In terms of biological role, plays a role as an inducible effector molecule that mediates Fas resistance produced by surface Ig engagement in B cells. The protein is Fas apoptotic inhibitory molecule 1 (Faim) of Mus musculus (Mouse).